A 403-amino-acid chain; its full sequence is F-box only protein 22 (403 aa).

M1 is subject to N-acetylmethionine. Residues 19–71 (STFVLSNLAEVVERVLTFLPAKALLRVACVCRLWRECVRRVLRTHRSVTWISA) form the F-box domain. S128 carries the phosphoserine modification. The residue at position 194 (K194) is an N6-acetyllysine.

Directly interacts with SKP1 and CUL1.

It is found in the cytoplasm. The protein localises to the myofibril. The protein resides in the sarcomere. It localises to the z line. Its function is as follows. Substrate-recognition component of the SCF (SKP1-CUL1-F-box protein)-type E3 ubiquitin ligase complex. Promotes the proteasome-dependent degradation of key sarcomeric proteins, such as alpha-actinin (ACTN2) and filamin-C (FLNC), essential for maintenance of normal contractile function. The protein is F-box only protein 22 (FBXO22) of Pongo abelii (Sumatran orangutan).